A 554-amino-acid chain; its full sequence is (E)-nerolidol synthase TPS18VF (554 aa).

Positions 276, 313, 317, 455, and 458 each coordinate (2E,6E)-farnesyl diphosphate. 2 residues coordinate Mg(2+): D313 and D317. The DDXXD motif signature appears at 313 to 317 (DDIFD). Positions 458, 462, and 466 each coordinate Mg(2+).

Belongs to the terpene synthase family. Tpsb subfamily. Mg(2+) is required as a cofactor. Mn(2+) serves as cofactor. As to expression, highly expressed in glandular trichomes.

It carries out the reaction (2E,6E)-farnesyl diphosphate + H2O = (6E)-nerolidol + diphosphate. It catalyses the reaction (2E)-geranyl diphosphate + H2O = (R)-linalool + diphosphate. The catalysed reaction is (2E)-geranyl diphosphate + H2O = (S)-linalool + diphosphate. Its pathway is secondary metabolite biosynthesis; terpenoid biosynthesis. In terms of biological role, involved in sesquiterpene olefins biosynthesis, constituants of cannabinoids and terpenoids-rich resins. Catalyzes primarily the conversion of (2E)-farnesyl diphosphate to (E)-nerolidol, and the conversion of (2E)-geranyl diphosphate to (+)linalool and (-)linalool. This chain is (E)-nerolidol synthase TPS18VF, found in Cannabis sativa (Hemp).